The sequence spans 454 residues: Apyrase (454 aa).

Over 1-7 (MLNQNSH) the chain is Cytoplasmic. A helical; Signal-anchor for type II membrane protein membrane pass occupies residues 8-28 (FIFIILAIFLVLPLSLLSKNV). At 29–454 (NAQIPLRRHL…TTNKIRVASS (426 aa)) the chain is on the extracellular side. ATP is bound at residue 48 to 58 (VIFDAGSTGSR). Residue Asn151 is glycosylated (N-linked (GlcNAc...) asparagine). Glu170 functions as the Proton acceptor in the catalytic mechanism. Position 194 to 204 (194 to 204 (ATIDLGGGSVQ)) interacts with ATP. N-linked (GlcNAc...) asparagine glycosylation is present at Asn262.

The protein belongs to the GDA1/CD39 NTPase family. Ca(2+) serves as cofactor. Post-translationally, the N-terminus is blocked.

Its subcellular location is the membrane. It carries out the reaction a ribonucleoside 5'-triphosphate + 2 H2O = a ribonucleoside 5'-phosphate + 2 phosphate + 2 H(+). Functionally, catalyzes the hydrolysis of phosphoanhydride bonds of nucleoside tri- and di-phosphates. In Solanum tuberosum (Potato), this protein is Apyrase (RROP1).